The primary structure comprises 122 residues: MIQMQTVLDVADNSGAKKLFCIKVLGGSKRKYAGVGDIVVCSVREAVPNAKVKKGDVVKVVIVRTAKEIGRPDGSYIRFDDNSGVVINNQREPVGTRIFGPVARELRAQKFMKIISLAPEVL.

It belongs to the universal ribosomal protein uL14 family. As to quaternary structure, part of the 50S ribosomal subunit. Forms a cluster with proteins L3 and L19. In the 70S ribosome, L14 and L19 interact and together make contacts with the 16S rRNA in bridges B5 and B8.

Its function is as follows. Binds to 23S rRNA. Forms part of two intersubunit bridges in the 70S ribosome. This chain is Large ribosomal subunit protein uL14, found in Geobacter sulfurreducens (strain ATCC 51573 / DSM 12127 / PCA).